We begin with the raw amino-acid sequence, 122 residues long: Large ribosomal subunit protein uL14 (122 aa).

This sequence belongs to the universal ribosomal protein uL14 family. Part of the 50S ribosomal subunit. Forms a cluster with proteins L3 and L19. In the 70S ribosome, L14 and L19 interact and together make contacts with the 16S rRNA in bridges B5 and B8.

Its function is as follows. Binds to 23S rRNA. Forms part of two intersubunit bridges in the 70S ribosome. The protein is Large ribosomal subunit protein uL14 of Stenotrophomonas maltophilia (strain R551-3).